A 158-amino-acid polypeptide reads, in one-letter code: Phosphopantetheine adenylyltransferase (158 aa).

Thr8 provides a ligand contact to substrate. Residues Thr8 to Phe9 and His16 contribute to the ATP site. Lys40, Leu72, and Arg86 together coordinate substrate. Residues Gly87–Arg89, Glu97, and His122–Ser128 each bind ATP.

It belongs to the bacterial CoaD family. As to quaternary structure, homohexamer. Requires Mg(2+) as cofactor.

Its subcellular location is the cytoplasm. The enzyme catalyses (R)-4'-phosphopantetheine + ATP + H(+) = 3'-dephospho-CoA + diphosphate. Its pathway is cofactor biosynthesis; coenzyme A biosynthesis; CoA from (R)-pantothenate: step 4/5. Reversibly transfers an adenylyl group from ATP to 4'-phosphopantetheine, yielding dephospho-CoA (dPCoA) and pyrophosphate. This Campylobacter jejuni subsp. jejuni serotype O:6 (strain 81116 / NCTC 11828) protein is Phosphopantetheine adenylyltransferase.